Reading from the N-terminus, the 106-residue chain is UPF0145 protein Nmul_A0734 (106 aa).

It belongs to the UPF0145 family.

The polypeptide is UPF0145 protein Nmul_A0734 (Nitrosospira multiformis (strain ATCC 25196 / NCIMB 11849 / C 71)).